Consider the following 524-residue polypeptide: Methyl-CpG-binding domain-containing protein 8 (524 aa).

Residues Cys45–Ala60 show a composition bias toward low complexity. The disordered stretch occupies residues Cys45–Gln151. The span at Phe75–Gln84 shows a compositional bias: polar residues. Over residues Arg106–Gln116 the composition is skewed to basic and acidic residues. Over residues Glu136–Glu149 the composition is skewed to acidic residues. Residues Val334–Lys406 enclose the MBD domain.

As to expression, expressed in shoot meristems, roots (vasculature and tips), hypocotyls (vasculature), cotyledons (vasculature and hydathodes), young leaves, buds, flowers and stems. Detected in stomata.

The protein localises to the nucleus. Functionally, probable transcriptional regulator. May regulates developmental traits such as flowering time. The chain is Methyl-CpG-binding domain-containing protein 8 (MBD8) from Arabidopsis thaliana (Mouse-ear cress).